Consider the following 81-residue polypeptide: Salivary thrombin inhibitor anophelin (81 aa).

The N-terminal stretch at 1–22 (MANKLFLISLLCVVLVAKIAQA) is a signal peptide. Residue Asn45 is glycosylated (N-linked (GlcNAc...) asparagine). The interval 70–73 (DPGR) is blocks active site cleft of host thrombin in a reverse direction compared to substrates.

Belongs to the anophelin family. Interacts with human F2 (thrombin); the interaction results in thrombin inhibition.

Its subcellular location is the secreted. Salivary protein with anticoagulant activity that inhibits host thrombin (F2). The polypeptide is Salivary thrombin inhibitor anophelin (Anopheles darlingi (Mosquito)).